Here is a 638-residue protein sequence, read N- to C-terminus: Intron-encoded RNA maturase bI4 (638 aa).

Positions 1-253 (MAFRKSNVYL…VFYSPNTLGQ (253 aa)) are COB exons 1 to 4 encoded. Residues 253–638 (QNMALLLITY…LKFNEKWNNN (386 aa)) are COB intron 4 encoded.

In the C-terminal section; belongs to the LAGLIDADG endonuclease family. As to quaternary structure, forms a ternary complex with intron derived RNA and the imported mitochondrial leucyl-tRNA synthetase NAM2. The proteins do not interact directly with each other. The mature protein may arise from proteolytic cleavage of an in-frame translation of COB exons 1 to 4 plus intron 4, containing the bI4 open reading frame. Cleavage would take place close to the Met-385 resulting in an active maturase of about 30 kDa.

It localises to the mitochondrion. In terms of biological role, mitochondrial mRNA maturase required for splicing of intron 4 of the cytochrome b (COB) gene, containing its own coding sequence, and intron 4 in COX1, coding for the related homing endonuclease aI4. In vivo splicing requires in addition the imported mitochondrial leucyl-tRNA synthetase NAM2. Both proteins seem to stimulate the intrinsic ribozyme activity of intron bI4 through binding to and stabilizing specific secondary and tertiary structure elements in the RNA. The chain is Intron-encoded RNA maturase bI4 (BI4) from Saccharomyces cerevisiae (strain ATCC 204508 / S288c) (Baker's yeast).